Consider the following 157-residue polypeptide: Small ribosomal subunit protein uS7 (157 aa).

Belongs to the universal ribosomal protein uS7 family. As to quaternary structure, part of the 30S ribosomal subunit. Contacts proteins S9 and S11.

One of the primary rRNA binding proteins, it binds directly to 16S rRNA where it nucleates assembly of the head domain of the 30S subunit. Is located at the subunit interface close to the decoding center, probably blocks exit of the E-site tRNA. This Caulobacter sp. (strain K31) protein is Small ribosomal subunit protein uS7.